Reading from the N-terminus, the 59-residue chain is Large ribosomal subunit protein uL30 (59 aa).

Belongs to the universal ribosomal protein uL30 family. As to quaternary structure, part of the 50S ribosomal subunit.

This Listeria innocua serovar 6a (strain ATCC BAA-680 / CLIP 11262) protein is Large ribosomal subunit protein uL30.